The sequence spans 309 residues: MIKIYAPASIGNVGVGFDILGAAIIPVNGSLLGDFVTVKLSNKFNLVNKGIFSNKLPKNTEQNIVWKCWLKFCNTIKRNIPVSIILEKNMPIGSGLGSSACSIVATLVAMNEFCDKPLNSKELLLLMGEVEGEISGSIHYDNVAPCYLGGLQLILEDSKIISQTIPNFKNWFWIVAWPGTKVPTAEARDILPKKYKKETCIKNSRYLAGFIHASYSQQPHLAARLMQDFIAEPYRIKLLPNYLYVKEKIKKIGAISSGISGSGPTIFSISDNINTAQKISAWLTENYLQNTTGFVHICFLDSKGVRKIG.

Position 91-101 (91-101 (PIGSGLGSSAC)) interacts with ATP.

The protein belongs to the GHMP kinase family. Homoserine kinase subfamily.

Its subcellular location is the cytoplasm. It catalyses the reaction L-homoserine + ATP = O-phospho-L-homoserine + ADP + H(+). It functions in the pathway amino-acid biosynthesis; L-threonine biosynthesis; L-threonine from L-aspartate: step 4/5. Catalyzes the ATP-dependent phosphorylation of L-homoserine to L-homoserine phosphate. The protein is Homoserine kinase of Buchnera aphidicola subsp. Acyrthosiphon pisum (strain APS) (Acyrthosiphon pisum symbiotic bacterium).